A 105-amino-acid polypeptide reads, in one-letter code: Large ribosomal subunit protein uL24 (105 aa).

The protein belongs to the universal ribosomal protein uL24 family. Part of the 50S ribosomal subunit.

One of two assembly initiator proteins, it binds directly to the 5'-end of the 23S rRNA, where it nucleates assembly of the 50S subunit. Its function is as follows. One of the proteins that surrounds the polypeptide exit tunnel on the outside of the subunit. The protein is Large ribosomal subunit protein uL24 of Mycobacterium leprae (strain Br4923).